The chain runs to 60 residues: Large ribosomal subunit protein uL30 (60 aa).

It belongs to the universal ribosomal protein uL30 family. Part of the 50S ribosomal subunit.

This is Large ribosomal subunit protein uL30 from Symbiobacterium thermophilum (strain DSM 24528 / JCM 14929 / IAM 14863 / T).